The following is a 404-amino-acid chain: Cysteine desulfurase IscS (404 aa).

Pyridoxal 5'-phosphate is bound by residues 75–76, asparagine 155, glutamine 183, and 203–205; these read AT and SGH. The residue at position 206 (lysine 206) is an N6-(pyridoxal phosphate)lysine. Threonine 243 contacts pyridoxal 5'-phosphate. The Cysteine persulfide intermediate role is filled by cysteine 328. Cysteine 328 contributes to the [2Fe-2S] cluster binding site.

It belongs to the class-V pyridoxal-phosphate-dependent aminotransferase family. NifS/IscS subfamily. As to quaternary structure, homodimer. Forms a heterotetramer with IscU, interacts with other sulfur acceptors. Pyridoxal 5'-phosphate is required as a cofactor.

It localises to the cytoplasm. The catalysed reaction is (sulfur carrier)-H + L-cysteine = (sulfur carrier)-SH + L-alanine. The protein operates within cofactor biosynthesis; iron-sulfur cluster biosynthesis. In terms of biological role, master enzyme that delivers sulfur to a number of partners involved in Fe-S cluster assembly, tRNA modification or cofactor biosynthesis. Catalyzes the removal of elemental sulfur atoms from cysteine to produce alanine. Functions as a sulfur delivery protein for Fe-S cluster synthesis onto IscU, an Fe-S scaffold assembly protein, as well as other S acceptor proteins. This chain is Cysteine desulfurase IscS, found in Shewanella putrefaciens (strain CN-32 / ATCC BAA-453).